The chain runs to 356 residues: Protein RecA (356 aa).

ATP is bound at residue 67–74; that stretch reads GPESSGKT.

This sequence belongs to the RecA family.

Its subcellular location is the cytoplasm. Functionally, can catalyze the hydrolysis of ATP in the presence of single-stranded DNA, the ATP-dependent uptake of single-stranded DNA by duplex DNA, and the ATP-dependent hybridization of homologous single-stranded DNAs. It interacts with LexA causing its activation and leading to its autocatalytic cleavage. In Yersinia pestis bv. Antiqua (strain Angola), this protein is Protein RecA.